The primary structure comprises 287 residues: Glutamate racemase (287 aa).

Residues 1–15 (MATKPQDANTTSREA) are compositionally biased toward polar residues. The segment at 1–25 (MATKPQDANTTSREAITSKADSPPR) is disordered. Substrate contacts are provided by residues 32–33 (DS) and 64–65 (YG). The active-site Proton donor/acceptor is the cysteine 96. 97-98 (NT) contributes to the substrate binding site. Cysteine 208 acts as the Proton donor/acceptor in catalysis. 209-210 (TH) serves as a coordination point for substrate.

This sequence belongs to the aspartate/glutamate racemases family.

It catalyses the reaction L-glutamate = D-glutamate. The protein operates within cell wall biogenesis; peptidoglycan biosynthesis. In terms of biological role, provides the (R)-glutamate required for cell wall biosynthesis. This is Glutamate racemase from Yersinia pseudotuberculosis serotype O:1b (strain IP 31758).